Consider the following 421-residue polypeptide: Acyl-coenzyme A thioesterase 5 (421 aa).

Residues Ser232, Asp326, and His360 each act as charge relay system in the active site. Positions 419–421 (AKL) match the Microbody targeting signal motif.

The protein belongs to the C/M/P thioester hydrolase family. As to expression, highly expressed in spleen, brain, testis and proximal and distal intestine; expressed at low level in the liver.

The protein resides in the peroxisome. It catalyses the reaction hexadecanoyl-CoA + H2O = hexadecanoate + CoA + H(+). It carries out the reaction decanoyl-CoA + H2O = decanoate + CoA + H(+). The enzyme catalyses octanoyl-CoA + H2O = octanoate + CoA + H(+). The catalysed reaction is dodecanoyl-CoA + H2O = dodecanoate + CoA + H(+). It catalyses the reaction tetradecanoyl-CoA + H2O = tetradecanoate + CoA + H(+). It carries out the reaction octadecanoyl-CoA + H2O = octadecanoate + CoA + H(+). The enzyme catalyses eicosanoyl-CoA + H2O = eicosanoate + CoA + H(+). The catalysed reaction is (9Z)-octadecenoyl-CoA + H2O = (9Z)-octadecenoate + CoA + H(+). It catalyses the reaction (9Z,12Z)-octadecadienoyl-CoA + H2O = (9Z,12Z)-octadecadienoate + CoA + H(+). It carries out the reaction (5Z,8Z,11Z,14Z)-eicosatetraenoyl-CoA + H2O = (5Z,8Z,11Z,14Z)-eicosatetraenoate + CoA + H(+). The enzyme catalyses (9Z)-hexadecenoyl-CoA + H2O = (9Z)-hexadecenoate + CoA + H(+). The protein operates within lipid metabolism; fatty acid metabolism. Catalyzes the hydrolysis of acyl-CoAs into free fatty acids and coenzyme A (CoASH), regulating their respective intracellular levels. Mainly active on medium-chain acyl-CoAs. Seems to be involved in intraperoxisomal regulation of acyl-CoA levels, but not CoASH levels. May have a function in termination of beta-oxidation of fatty acids. The sequence is that of Acyl-coenzyme A thioesterase 5 (Acot5) from Mus musculus (Mouse).